We begin with the raw amino-acid sequence, 764 residues long: Nucleolar complex-associated protein 2 (764 aa).

Positions 3–69 (AKDDKKRVKK…EEELKRLQEK (67 aa)) form a coiled coil. Disordered regions lie at residues 23 to 67 (ELNN…KRLQ), 89 to 113 (ATEIEDDADVEPDTDLEDTEKEGDD), 627 to 646 (AVFGKNAPSSDDEDDEDRME), and 651 to 726 (AFNS…EDDA). A compositionally biased stretch (basic and acidic residues) spans 30 to 41 (IDAHDIVMEQKS). Basic residues predominate over residues 42–51 (DKKRGKKVKS). Residues 52-67 (KKAEAEEHEEELKRLQ) show a composition bias toward basic and acidic residues. Acidic residues predominate over residues 90-113 (TEIEDDADVEPDTDLEDTEKEGDD). Over residues 661–672 (DSKEKEPEEEKT) the composition is skewed to basic and acidic residues. The short motif at 673–680 (KKKKRKRG) is the Nuclear localization signal 1 element. Residues 673–682 (KKKKRKRGGK) are compositionally biased toward basic residues. Residues 693–726 (GLGEDDVVEDFVLSSDEEEEDLFDIGGDKDEDDA) show a composition bias toward acidic residues. The Nuclear localization signal 2 motif lies at 738–745 (SKKTKGTY).

It belongs to the NOC2 family. As to quaternary structure, component of nucleolar complexes. Forms homodimers. Interacts with RBL and NOC3 in both the nucleolus and nucleoplasm. Binds to SWA2.

The protein localises to the nucleus. Its subcellular location is the nucleolus. The protein resides in the nucleoplasm. Its function is as follows. Together with SWA2, probably involved in pre-ribosome export from the nucleus to the cytoplasm. The polypeptide is Nucleolar complex-associated protein 2 (Arabidopsis thaliana (Mouse-ear cress)).